We begin with the raw amino-acid sequence, 237 residues long: CDP-diacylglycerol--serine O-phosphatidyltransferase (237 aa).

The next 8 membrane-spanning stretches (helical) occupy residues 3–23, 25–45, 73–93, 95–115, 124–144, 150–170, 184–204, and 207–227; these read INPL…LGMM, IFYA…ASLI, VIAF…YNFG, IGMA…ARFN, YSFI…CVLL, FLEG…GVLM, WNLK…VRPL, and LSVF…FLMV.

The protein belongs to the CDP-alcohol phosphatidyltransferase class-I family.

The protein localises to the cell membrane. It carries out the reaction a CDP-1,2-diacyl-sn-glycerol + L-serine = a 1,2-diacyl-sn-glycero-3-phospho-L-serine + CMP + H(+). This is CDP-diacylglycerol--serine O-phosphatidyltransferase (pssA) from Helicobacter pylori (strain ATCC 700392 / 26695) (Campylobacter pylori).